A 458-amino-acid polypeptide reads, in one-letter code: Jacalin-related lectin 22 (458 aa).

3 Jacalin-type lectin domains span residues 5–153 (YRKL…YFVL), 160–301 (LYKL…YFGP), and 311–453 (SKKL…TIVP).

It belongs to the jacalin lectin family. In terms of assembly, component of the PYK10 complex, at least composed of PYK10/BGLU23, BGLU21, BGLU22, JAL22, JAL23, PBP1/JAL30, PBP2/JAL31, JAL32, JAL33, JAL34, JAL35, GLL22 and GLL23.

Its function is as follows. Inhibitor-type lectin that may regulate the correct polymerization and activation of BGLU23/PYK10 upon tissue damage. The polypeptide is Jacalin-related lectin 22 (JAL22) (Arabidopsis thaliana (Mouse-ear cress)).